The following is a 356-amino-acid chain: Protein RecA (356 aa).

ATP is bound at residue 69-76 (GPESSGKT).

It belongs to the RecA family.

It localises to the cytoplasm. Can catalyze the hydrolysis of ATP in the presence of single-stranded DNA, the ATP-dependent uptake of single-stranded DNA by duplex DNA, and the ATP-dependent hybridization of homologous single-stranded DNAs. It interacts with LexA causing its activation and leading to its autocatalytic cleavage. The sequence is that of Protein RecA from Gloeothece citriformis (strain PCC 7424) (Cyanothece sp. (strain PCC 7424)).